Consider the following 810-residue polypeptide: Lon protease (810 aa).

The 194-residue stretch at 16 to 209 (YPVPPLRDIV…RVYAFMEGEI (194 aa)) folds into the Lon N-terminal domain. 361–368 (GPPGVGKT) lines the ATP pocket. Residues 598–779 (EDLVGVTTGL…DDVLKHALVR (182 aa)) enclose the Lon proteolytic domain. Residues serine 685 and lysine 728 contribute to the active site.

Belongs to the peptidase S16 family. In terms of assembly, homohexamer. Organized in a ring with a central cavity.

It is found in the cytoplasm. The catalysed reaction is Hydrolysis of proteins in presence of ATP.. Its function is as follows. ATP-dependent serine protease that mediates the selective degradation of mutant and abnormal proteins as well as certain short-lived regulatory proteins. Required for cellular homeostasis and for survival from DNA damage and developmental changes induced by stress. Degrades polypeptides processively to yield small peptide fragments that are 5 to 10 amino acids long. Binds to DNA in a double-stranded, site-specific manner. Involved in iron uptake. In Azospirillum brasilense, this protein is Lon protease.